We begin with the raw amino-acid sequence, 349 residues long: PhoH-like protein (349 aa).

Position 147 to 154 (147 to 154) interacts with ATP; the sequence is GPAGTGKT.

It belongs to the PhoH family.

The protein resides in the cytoplasm. The chain is PhoH-like protein from Mycobacterium leprae (strain TN).